A 326-amino-acid polypeptide reads, in one-letter code: Tetraacyldisaccharide 4'-kinase (326 aa).

55–62 (TVGGNGKT) contacts ATP.

Belongs to the LpxK family.

It carries out the reaction a lipid A disaccharide + ATP = a lipid IVA + ADP + H(+). The protein operates within glycolipid biosynthesis; lipid IV(A) biosynthesis; lipid IV(A) from (3R)-3-hydroxytetradecanoyl-[acyl-carrier-protein] and UDP-N-acetyl-alpha-D-glucosamine: step 6/6. In terms of biological role, transfers the gamma-phosphate of ATP to the 4'-position of a tetraacyldisaccharide 1-phosphate intermediate (termed DS-1-P) to form tetraacyldisaccharide 1,4'-bis-phosphate (lipid IVA). The chain is Tetraacyldisaccharide 4'-kinase from Tolumonas auensis (strain DSM 9187 / NBRC 110442 / TA 4).